The chain runs to 756 residues: Serine/threonine-protein kinase DCLK1 (756 aa).

Residues Ser-32 and Ser-36 each carry the phosphoserine modification. A Phosphothreonine modification is found at Thr-46. Doublecortin domains lie at 57–143 (KKVR…LEYT) and 186–269 (KLVT…QDDF). Positions 288–393 (ASASRRGTTK…QRGWRREESE (106 aa)) are disordered. Residues 297–313 (KSPGPSRRSKSPASTSS) show a composition bias toward low complexity. A phosphoserine mark is found at Ser-305, Ser-307, Ser-330, Ser-332, Ser-334, Ser-337, Ser-347, Ser-352, Ser-353, Ser-355, Ser-358, Cys-362, and Ser-364. A compositionally biased stretch (low complexity) spans 347-364 (SQHGGSSTSLSSTKVCSS). The span at 366 to 375 (DENDGPGEGD) shows a compositional bias: acidic residues. Residue Ser-392 is modified to Phosphoserine. One can recognise a Protein kinase domain in the interval 406–663 (YKVGRTIGDG…AVQVLEHPWV (258 aa)). ATP-binding positions include 412–420 (IGDGNFAVV) and Lys-435. Asp-527 (proton acceptor) is an active-site residue. Tyr-536 carries the phosphotyrosine modification. The segment covering 711–723 (QVFRRRRNQDVRS) has biased composition (basic and acidic residues). The interval 711 to 756 (QVFRRRRNQDVRSRYKAQPAPPELNSESEDYSPSSSETVRSPNSPF) is disordered. A phosphoserine mark is found at Ser-742, Ser-751, and Ser-754.

It belongs to the protein kinase superfamily. CAMK Ser/Thr protein kinase family. CaMK subfamily.

It carries out the reaction L-seryl-[protein] + ATP = O-phospho-L-seryl-[protein] + ADP + H(+). The enzyme catalyses L-threonyl-[protein] + ATP = O-phospho-L-threonyl-[protein] + ADP + H(+). Its function is as follows. Probable kinase that may be involved in a calcium-signaling pathway controlling neuronal migration in the developing brain. May also participate in functions of the mature nervous system. This Mus musculus (Mouse) protein is Serine/threonine-protein kinase DCLK1 (Dclk1).